Consider the following 191-residue polypeptide: A-type ATP synthase subunit E (191 aa).

Belongs to the V-ATPase E subunit family. As to quaternary structure, has multiple subunits with at least A(3), B(3), C, D, E, F, H, I and proteolipid K(x).

Its subcellular location is the cell membrane. In terms of biological role, component of the A-type ATP synthase that produces ATP from ADP in the presence of a proton gradient across the membrane. The polypeptide is A-type ATP synthase subunit E (Methanoregula boonei (strain DSM 21154 / JCM 14090 / 6A8)).